We begin with the raw amino-acid sequence, 515 residues long: Bifunctional dihydrofolate reductase-thymidylate synthase (515 aa).

The region spanning 26 to 228 is the DHFR domain; it reads AFSIVVAADQ…LSYEIMKYVP (203 aa). V30 contacts substrate. NADP(+)-binding positions include A32, 38 to 44, 81 to 83, and 101 to 104; these read GIGDGET, RKT, and LSCR. Substrate is bound by residues I154, Y160, and T178. 155–162 lines the NADP(+) pocket; the sequence is GGARVYTE. The segment at 233-515 is thymidylate synthase; that stretch reads ERQYLELIDR…YPPIKMEMAV (283 aa). R253 contacts dUMP. C395 is an active-site residue. DUMP-binding positions include H396, 416-420, N428, and 458-460; these read QRCCD and HVY.

It in the N-terminal section; belongs to the dihydrofolate reductase family. In the C-terminal section; belongs to the thymidylate synthase family.

It carries out the reaction (6S)-5,6,7,8-tetrahydrofolate + NADP(+) = 7,8-dihydrofolate + NADPH + H(+). The catalysed reaction is dUMP + (6R)-5,10-methylene-5,6,7,8-tetrahydrofolate = 7,8-dihydrofolate + dTMP. Its pathway is cofactor biosynthesis; tetrahydrofolate biosynthesis; 5,6,7,8-tetrahydrofolate from 7,8-dihydrofolate: step 1/1. Its function is as follows. Bifunctional enzyme. Involved in de novo dTMP biosynthesis. Key enzyme in folate metabolism. Catalyzes an essential reaction for de novo glycine and purine synthesis, DNA precursor synthesis, and for the conversion of dUMP to dTMP. The protein is Bifunctional dihydrofolate reductase-thymidylate synthase of Crithidia fasciculata.